The following is a 254-amino-acid chain: Bidirectional sugar transporter SWEET6b (254 aa).

Residues Met1 to Asn9 lie on the Extracellular side of the membrane. Residues Val10–Phe30 traverse the membrane as a helical segment. One can recognise a MtN3/slv 1 domain in the interval Val10–Lys98. Residues Trp31–Asp45 lie on the Cytoplasmic side of the membrane. The helical transmembrane segment at Pro46 to His66 threads the bilayer. Over Pro67–Ser69 the chain is Extracellular. A helical transmembrane segment spans residues Ile70–Phe90. Residues Phe91–Arg101 are Cytoplasmic-facing. The helical transmembrane segment at Met102–Leu122 threads the bilayer. Residues Gly123–Ser131 are Extracellular-facing. A helical membrane pass occupies residues Met132–Ile152. In terms of domain architecture, MtN3/slv 2 spans Ile133–Thr216. Residues Met153 to Met165 lie on the Cytoplasmic side of the membrane. A helical membrane pass occupies residues Pro166–Ile186. Over Arg187–Asp189 the chain is Extracellular. A helical membrane pass occupies residues Ile190–Tyr210. Residues Ala211–Arg254 lie on the Cytoplasmic side of the membrane.

Belongs to the SWEET sugar transporter family. In terms of assembly, forms homooligomers and/or heterooligomers.

Its subcellular location is the cell membrane. Mediates both low-affinity uptake and efflux of sugar across the plasma membrane. This is Bidirectional sugar transporter SWEET6b (SWEET6B) from Oryza sativa subsp. indica (Rice).